We begin with the raw amino-acid sequence, 217 residues long: Uridylate kinase (217 aa).

Lysine 6–arginine 10 contributes to the ATP binding site. Glycine 38 contacts UMP. 2 residues coordinate ATP: glycine 39 and arginine 43. UMP is bound by residues aspartate 60 and phenylalanine 107–threonine 113. Asparagine 134, tyrosine 139, and aspartate 142 together coordinate ATP.

The protein belongs to the UMP kinase family. In terms of assembly, homohexamer.

The protein resides in the cytoplasm. It carries out the reaction UMP + ATP = UDP + ADP. The protein operates within pyrimidine metabolism; CTP biosynthesis via de novo pathway; UDP from UMP (UMPK route): step 1/1. With respect to regulation, inhibited by UTP. Its function is as follows. Catalyzes the reversible phosphorylation of UMP to UDP. This is Uridylate kinase from Pyrobaculum islandicum (strain DSM 4184 / JCM 9189 / GEO3).